The primary structure comprises 146 residues: D-aminoacyl-tRNA deacylase (146 aa).

Residues 137–138 (GP) carry the Gly-cisPro motif, important for rejection of L-amino acids motif.

This sequence belongs to the DTD family. In terms of assembly, homodimer.

Its subcellular location is the cytoplasm. It catalyses the reaction glycyl-tRNA(Ala) + H2O = tRNA(Ala) + glycine + H(+). It carries out the reaction a D-aminoacyl-tRNA + H2O = a tRNA + a D-alpha-amino acid + H(+). An aminoacyl-tRNA editing enzyme that deacylates mischarged D-aminoacyl-tRNAs. Also deacylates mischarged glycyl-tRNA(Ala), protecting cells against glycine mischarging by AlaRS. Acts via tRNA-based rather than protein-based catalysis; rejects L-amino acids rather than detecting D-amino acids in the active site. By recycling D-aminoacyl-tRNA to D-amino acids and free tRNA molecules, this enzyme counteracts the toxicity associated with the formation of D-aminoacyl-tRNA entities in vivo and helps enforce protein L-homochirality. In Bacillus thuringiensis (strain Al Hakam), this protein is D-aminoacyl-tRNA deacylase.